A 126-amino-acid polypeptide reads, in one-letter code: Fluoride-specific ion channel FluC (126 aa).

A run of 4 helical transmembrane segments spans residues 4–24 (PLLS…FLGL), 33–53 (IPLG…FAMA), 67–87 (FVIT…IEIV), and 97–117 (MAML…CLGL). Residues glycine 74 and threonine 77 each coordinate Na(+).

This sequence belongs to the fluoride channel Fluc/FEX (TC 1.A.43) family.

Its subcellular location is the cell inner membrane. The enzyme catalyses fluoride(in) = fluoride(out). Its activity is regulated as follows. Na(+) is not transported, but it plays an essential structural role and its presence is essential for fluoride channel function. Its function is as follows. Fluoride-specific ion channel. Important for reducing fluoride concentration in the cell, thus reducing its toxicity. This chain is Fluoride-specific ion channel FluC, found in Acinetobacter baumannii (strain SDF).